The sequence spans 35 residues: Photosystem II reaction center protein M (35 aa).

Residues 7–27 (GFIATILFVLVPTVFLLILYI) traverse the membrane as a helical segment.

This sequence belongs to the PsbM family. In terms of assembly, PSII is composed of 1 copy each of membrane proteins PsbA, PsbB, PsbC, PsbD, PsbE, PsbF, PsbH, PsbI, PsbJ, PsbK, PsbL, PsbM, PsbT, PsbX, PsbY, PsbZ, Psb30/Ycf12, peripheral proteins PsbO, CyanoQ (PsbQ), PsbU, PsbV and a large number of cofactors. It forms dimeric complexes.

It is found in the cellular thylakoid membrane. Functionally, one of the components of the core complex of photosystem II (PSII). PSII is a light-driven water:plastoquinone oxidoreductase that uses light energy to abstract electrons from H(2)O, generating O(2) and a proton gradient subsequently used for ATP formation. It consists of a core antenna complex that captures photons, and an electron transfer chain that converts photonic excitation into a charge separation. This subunit is found at the monomer-monomer interface. The protein is Photosystem II reaction center protein M of Crocosphaera subtropica (strain ATCC 51142 / BH68) (Cyanothece sp. (strain ATCC 51142)).